A 582-amino-acid polypeptide reads, in one-letter code: Putative transcriptional regulator HVO_1357 (582 aa).

The 111-residue stretch at 19–129 folds into the Response regulatory domain; it reads VVLVVDDDED…EVKETVEELL (111 aa). Asp67 carries the post-translational modification 4-aspartylphosphate. Residues 165–203 are a coiled coil; that stretch reads LSDLRSRLEAVRAEHEAAIRNREAQLDRLNRTNELLRDV. The region spanning 517-569 is the HTH bat-type domain; it reads LTDRQRTVLETSLVSGYFEWPRGSTAEEVADSLGISPPTLHEHLRTAERKLIE.

Functionally, may be part of a signal-dependent gene regulation cascade that is relevant to swimming motility. May be involved in the transcription regulation of target genes. In Haloferax volcanii (strain ATCC 29605 / DSM 3757 / JCM 8879 / NBRC 14742 / NCIMB 2012 / VKM B-1768 / DS2) (Halobacterium volcanii), this protein is Putative transcriptional regulator HVO_1357.